Reading from the N-terminus, the 217-residue chain is ITG-like peptide (217 aa).

Residues 1 to 21 (MHRTMAVTAVLVLSAAGAAHA) form the signal peptide. Positions 22 to 208 (WGGLFNRFSS…REFVQHTAGE (187 aa)) are excised as a propeptide.

As to expression, ITG-like peptide: Expressed in corpora cardiaca (CC), corpora allata (CA), antennal lobe (AL) and gnathal ganglion (GNG) (at protein level). Expression in AL detected in all animals, expression in GNG detected in most animals and in CA and CC detected in few animals (at protein level).

It localises to the secreted. The protein is ITG-like peptide of Agrotis ipsilon (Black cutworm moth).